The primary structure comprises 127 residues: Phosphoribosyl-AMP cyclohydrolase (127 aa).

Asp-96 contacts Mg(2+). Position 97 (Cys-97) interacts with Zn(2+). Mg(2+) contacts are provided by Asp-98 and Asp-100. Residues Cys-113 and Cys-120 each contribute to the Zn(2+) site.

The protein belongs to the PRA-CH family. As to quaternary structure, homodimer. Mg(2+) serves as cofactor. Requires Zn(2+) as cofactor.

Its subcellular location is the cytoplasm. It catalyses the reaction 1-(5-phospho-beta-D-ribosyl)-5'-AMP + H2O = 1-(5-phospho-beta-D-ribosyl)-5-[(5-phospho-beta-D-ribosylamino)methylideneamino]imidazole-4-carboxamide. The protein operates within amino-acid biosynthesis; L-histidine biosynthesis; L-histidine from 5-phospho-alpha-D-ribose 1-diphosphate: step 3/9. Its function is as follows. Catalyzes the hydrolysis of the adenine ring of phosphoribosyl-AMP. This Corynebacterium jeikeium (strain K411) protein is Phosphoribosyl-AMP cyclohydrolase.